A 179-amino-acid polypeptide reads, in one-letter code: Protein LDB18 (179 aa).

Functionally, may be involved in protein-linked oligosaccharide phosphorylation since the deletion reduces the negative charge of the cell surface. This is Protein LDB18 (LDB18) from Saccharomyces cerevisiae (strain ATCC 204508 / S288c) (Baker's yeast).